We begin with the raw amino-acid sequence, 618 residues long: 1-deoxy-D-xylulose-5-phosphate synthase (618 aa).

Thiamine diphosphate contacts are provided by residues histidine 74 and 115–117; that span reads GHS. Aspartate 146 contributes to the Mg(2+) binding site. Residues 147–148, asparagine 175, tyrosine 286, and glutamate 366 contribute to the thiamine diphosphate site; that span reads GA. Asparagine 175 contributes to the Mg(2+) binding site.

The protein belongs to the transketolase family. DXPS subfamily. As to quaternary structure, homodimer. Mg(2+) serves as cofactor. The cofactor is thiamine diphosphate.

The enzyme catalyses D-glyceraldehyde 3-phosphate + pyruvate + H(+) = 1-deoxy-D-xylulose 5-phosphate + CO2. The protein operates within metabolic intermediate biosynthesis; 1-deoxy-D-xylulose 5-phosphate biosynthesis; 1-deoxy-D-xylulose 5-phosphate from D-glyceraldehyde 3-phosphate and pyruvate: step 1/1. Catalyzes the acyloin condensation reaction between C atoms 2 and 3 of pyruvate and glyceraldehyde 3-phosphate to yield 1-deoxy-D-xylulose-5-phosphate (DXP). This Clostridium tetani (strain Massachusetts / E88) protein is 1-deoxy-D-xylulose-5-phosphate synthase.